A 67-amino-acid chain; its full sequence is Major cold shock protein (67 aa).

In terms of domain architecture, CSD spans 4–63 (GTVKWFNAEKGFGFISTENGQDVFAHFSAIQTNGFKTLEEGQKVAFDVEEGQRGPQAVNI).

In terms of assembly, homodimer.

The protein resides in the cytoplasm. This chain is Major cold shock protein (cspA), found in Streptococcus pyogenes serotype M3 (strain ATCC BAA-595 / MGAS315).